Here is a 240-residue protein sequence, read N- to C-terminus: Ubiquinone biosynthesis O-methyltransferase (240 aa).

S-adenosyl-L-methionine-binding residues include Arg44, Gly64, Asp85, and Met129.

The protein belongs to the methyltransferase superfamily. UbiG/COQ3 family.

It catalyses the reaction a 3-demethylubiquinol + S-adenosyl-L-methionine = a ubiquinol + S-adenosyl-L-homocysteine + H(+). The enzyme catalyses a 3-(all-trans-polyprenyl)benzene-1,2-diol + S-adenosyl-L-methionine = a 2-methoxy-6-(all-trans-polyprenyl)phenol + S-adenosyl-L-homocysteine + H(+). The protein operates within cofactor biosynthesis; ubiquinone biosynthesis. O-methyltransferase that catalyzes the 2 O-methylation steps in the ubiquinone biosynthetic pathway. The sequence is that of Ubiquinone biosynthesis O-methyltransferase from Escherichia coli (strain K12 / MC4100 / BW2952).